Consider the following 539-residue polypeptide: Phosphoenolpyruvate carboxykinase (ATP) (539 aa).

Residues Arg61, Tyr195, and Lys201 each contribute to the substrate site. Residues Lys201, His220, and 238–246 (GLSGTGKTT) each bind ATP. Positions 201 and 220 each coordinate Mn(2+). Asp259 serves as a coordination point for Mn(2+). Glu287, Arg325, and Thr450 together coordinate ATP. Position 325 (Arg325) interacts with substrate.

This sequence belongs to the phosphoenolpyruvate carboxykinase (ATP) family. The cofactor is Mn(2+).

The protein resides in the cytoplasm. The catalysed reaction is oxaloacetate + ATP = phosphoenolpyruvate + ADP + CO2. Its pathway is carbohydrate biosynthesis; gluconeogenesis. Functionally, involved in the gluconeogenesis. Catalyzes the conversion of oxaloacetate (OAA) to phosphoenolpyruvate (PEP) through direct phosphoryl transfer between the nucleoside triphosphate and OAA. The protein is Phosphoenolpyruvate carboxykinase (ATP) of Methylorubrum extorquens (strain CM4 / NCIMB 13688) (Methylobacterium extorquens).